The sequence spans 131 residues: Small ribosomal subunit protein uS8 (131 aa).

The protein belongs to the universal ribosomal protein uS8 family. Part of the 30S ribosomal subunit. Contacts proteins S5 and S12.

One of the primary rRNA binding proteins, it binds directly to 16S rRNA central domain where it helps coordinate assembly of the platform of the 30S subunit. The protein is Small ribosomal subunit protein uS8 of Acholeplasma laidlawii (strain PG-8A).